A 722-amino-acid polypeptide reads, in one-letter code: Polyribonucleotide nucleotidyltransferase (722 aa).

Residues D487 and D493 each contribute to the Mg(2+) site. A KH domain is found at 554 to 613 (PRMVSFKIHPDKIREVIGKGGATIQALTKETGCSIDIKDDGTVTIASTSAEGMAEAKARI). In terms of domain architecture, S1 motif spans 623-691 (GKIYEGPVVK…ERGRLRLSLK (69 aa)).

It belongs to the polyribonucleotide nucleotidyltransferase family. It depends on Mg(2+) as a cofactor.

It localises to the cytoplasm. It catalyses the reaction RNA(n+1) + phosphate = RNA(n) + a ribonucleoside 5'-diphosphate. Involved in mRNA degradation. Catalyzes the phosphorolysis of single-stranded polyribonucleotides processively in the 3'- to 5'-direction. In Polynucleobacter necessarius subsp. necessarius (strain STIR1), this protein is Polyribonucleotide nucleotidyltransferase.